The following is a 119-amino-acid chain: Putative ankyrin repeat domain-containing protein 26-like 1 (119 aa).

Positions glutamate 15–lysine 112 form a coiled coil.

This is Putative ankyrin repeat domain-containing protein 26-like 1 (ANKRD36BP1) from Homo sapiens (Human).